The sequence spans 347 residues: Eukaryotic translation initiation factor 3 subunit H (347 aa).

The region spanning 6–149 is the MPN domain; sequence VCIDSSVALK…PSSTGPQGHT (144 aa). Residues 136 to 155 are disordered; that stretch reads SDTDPSSTGPQGHTTTTPSG. The span at 138–155 shows a compositional bias: polar residues; sequence TDPSSTGPQGHTTTTPSG.

It belongs to the eIF-3 subunit H family. As to quaternary structure, component of the eukaryotic translation initiation factor 3 (eIF-3) complex.

It is found in the cytoplasm. Functionally, component of the eukaryotic translation initiation factor 3 (eIF-3) complex, which is involved in protein synthesis of a specialized repertoire of mRNAs and, together with other initiation factors, stimulates binding of mRNA and methionyl-tRNAi to the 40S ribosome. The eIF-3 complex specifically targets and initiates translation of a subset of mRNAs involved in cell proliferation. The protein is Eukaryotic translation initiation factor 3 subunit H of Yarrowia lipolytica (strain CLIB 122 / E 150) (Yeast).